The chain runs to 115 residues: Ribonuclease P protein component (115 aa).

Belongs to the RnpA family. In terms of assembly, consists of a catalytic RNA component (M1 or rnpB) and a protein subunit.

It carries out the reaction Endonucleolytic cleavage of RNA, removing 5'-extranucleotides from tRNA precursor.. RNaseP catalyzes the removal of the 5'-leader sequence from pre-tRNA to produce the mature 5'-terminus. It can also cleave other RNA substrates such as 4.5S RNA. The protein component plays an auxiliary but essential role in vivo by binding to the 5'-leader sequence and broadening the substrate specificity of the ribozyme. The sequence is that of Ribonuclease P protein component from Bacillus cereus (strain Q1).